The primary structure comprises 119 residues: Basic phospholipase A2 DE-1 (119 aa).

Disulfide bonds link cysteine 11–cysteine 71, cysteine 26–cysteine 118, cysteine 28–cysteine 44, cysteine 43–cysteine 99, cysteine 50–cysteine 92, cysteine 60–cysteine 85, and cysteine 78–cysteine 90. Residues tyrosine 27, glycine 29, glycine 31, and aspartate 48 each coordinate Ca(2+). Aspartate 93 is a catalytic residue.

This sequence belongs to the phospholipase A2 family. Group I subfamily. D49 sub-subfamily. Requires Ca(2+) as cofactor. As to expression, expressed by the venom gland.

The protein resides in the secreted. It catalyses the reaction a 1,2-diacyl-sn-glycero-3-phosphocholine + H2O = a 1-acyl-sn-glycero-3-phosphocholine + a fatty acid + H(+). Functionally, PLA2 catalyzes the calcium-dependent hydrolysis of the 2-acyl groups in 3-sn-phosphoglycerides. This chain is Basic phospholipase A2 DE-1, found in Hemachatus haemachatus (Rinkhals).